Here is a 330-residue protein sequence, read N- to C-terminus: DNA repair and recombination protein RadA (330 aa).

124–131 lines the ATP pocket; it reads GEFGSGKT.

Belongs to the eukaryotic RecA-like protein family.

In terms of biological role, involved in DNA repair and in homologous recombination. Binds and assemble on single-stranded DNA to form a nucleoprotein filament. Hydrolyzes ATP in a ssDNA-dependent manner and promotes DNA strand exchange between homologous DNA molecules. The protein is DNA repair and recombination protein RadA of Pyrobaculum neutrophilum (strain DSM 2338 / JCM 9278 / NBRC 100436 / V24Sta) (Thermoproteus neutrophilus).